Reading from the N-terminus, the 758-residue chain is 5-methyltetrahydropteroyltriglutamate--homocysteine methyltransferase (758 aa).

Residues 17–20 (RELK) and lysine 110 contribute to the 5-methyltetrahydropteroyltri-L-glutamate site. Residues 428–430 (IGS) and glutamate 481 contribute to the L-homocysteine site. L-methionine is bound by residues 428 to 430 (IGS) and glutamate 481. Residues 512-513 (RC) and tryptophan 558 each bind 5-methyltetrahydropteroyltri-L-glutamate. Position 596 (aspartate 596) interacts with L-homocysteine. Aspartate 596 contacts L-methionine. Glutamate 602 contributes to the 5-methyltetrahydropteroyltri-L-glutamate binding site. Residues histidine 638, cysteine 640, and glutamate 662 each coordinate Zn(2+). The active-site Proton donor is histidine 691. Cysteine 723 contacts Zn(2+).

It belongs to the vitamin-B12 independent methionine synthase family. Zn(2+) is required as a cofactor.

It catalyses the reaction 5-methyltetrahydropteroyltri-L-glutamate + L-homocysteine = tetrahydropteroyltri-L-glutamate + L-methionine. Its pathway is amino-acid biosynthesis; L-methionine biosynthesis via de novo pathway; L-methionine from L-homocysteine (MetE route): step 1/1. Catalyzes the transfer of a methyl group from 5-methyltetrahydrofolate to homocysteine resulting in methionine formation. The polypeptide is 5-methyltetrahydropteroyltriglutamate--homocysteine methyltransferase (Thermosynechococcus vestitus (strain NIES-2133 / IAM M-273 / BP-1)).